We begin with the raw amino-acid sequence, 248 residues long: Gamma-glutamyl peptidase 2 (248 aa).

In terms of domain architecture, Glutamine amidotransferase type-1 spans serine 17–valine 212. The active-site Nucleophile is the cysteine 101. Catalysis depends on residues histidine 191 and glutamate 193.

Belongs to the peptidase C26 family.

Its subcellular location is the cytoplasm. It is found in the cytosol. It carries out the reaction an S-[(1E)-1-(hydroxyimino)-omega-(methylsulfanyl)alkyl]-L-glutathione + H2O = an S-[(1E)-1-(hydroxyimino)-omega-(methylsulfanyl)alkyl]-L-cysteinylglycine + L-glutamate. It catalyses the reaction (E)-1-(glutathione-S-yl)-2-(1H-indol-3-yl)acetohydroximate + H2O = (E)-1-(glycyl-L-cystein-S-yl)-2-(1H-indol-3-yl)acetohydroximate + L-glutamate. The catalysed reaction is 2-(glutathion-S-yl)-2-(1H-indol-3-yl)acetonitrile + H2O = 2-(glycyl-L-cystein-S-yl)-2-(1H-indol-3-yl)acetonitrile + L-glutamate. The enzyme catalyses (Z)-1-(glutathione-S-yl)-2-phenylacetohydroximate + H2O = (Z)-1-(glycyl-L-cystein-S-yl)-2-phenylacetohydroximate + L-glutamate. Its pathway is secondary metabolite biosynthesis. Its function is as follows. Involved in glucosinolate biosynthesis. Hydrolyzes the gamma-glutamyl peptide bond of several glutathione (GSH) conjugates to produce Cys-Gly conjugates related to glucosinolates. The gamma-Glu-Cys-Gly-GSH conjugates are the sulfur-donating molecule in glucosinolate biosynthesis. This Arabidopsis thaliana (Mouse-ear cress) protein is Gamma-glutamyl peptidase 2.